Here is a 307-residue protein sequence, read N- to C-terminus: Agmatinase (307 aa).

H126, D149, H151, D153, D230, and D232 together coordinate Mn(2+).

This sequence belongs to the arginase family. Agmatinase subfamily. Mn(2+) serves as cofactor.

It carries out the reaction agmatine + H2O = urea + putrescine. It participates in amine and polyamine biosynthesis; putrescine biosynthesis via agmatine pathway; putrescine from agmatine: step 1/1. Catalyzes the formation of putrescine from agmatine. This Sodalis glossinidius (strain morsitans) protein is Agmatinase.